The sequence spans 568 residues: PTS system lactose-specific EIICB component (568 aa).

One can recognise a PTS EIIC type-3 domain in the interval 7-409 (LIEKGKPFFE…VVDTIIYYPF (403 aa)). The next 9 membrane-spanning stretches (helical) occupy residues 30–50 (GFIA…IAYV), 62–82 (IETF…FFVG), 103–123 (INFL…AAEP), 128–148 (GFLT…AAFV), 183–203 (FTVS…TLGV), 222–242 (GYLG…VGIH), 283–303 (FIAT…FMWI), 339–359 (IFFV…KFFV), and 389–409 (VLSF…YYPF). One can recognise a PTS EIIB type-3 domain in the interval 466-568 (ETNVLVLCAG…ALAFVQQQFD (103 aa)). Cys473 functions as the Phosphocysteine intermediate; for EIIB activity in the catalytic mechanism. The residue at position 473 (Cys473) is a Phosphocysteine; by EIIA.

The protein resides in the cell membrane. It catalyses the reaction lactose(out) + N(pros)-phospho-L-histidyl-[protein] = lactose 6-phosphate(in) + L-histidyl-[protein]. Its function is as follows. The phosphoenolpyruvate-dependent sugar phosphotransferase system (sugar PTS), a major carbohydrate active transport system, catalyzes the phosphorylation of incoming sugar substrates concomitantly with their translocation across the cell membrane. The enzyme II LacEF PTS system is involved in lactose transport. The sequence is that of PTS system lactose-specific EIICB component from Lactococcus lactis subsp. lactis (Streptococcus lactis).